The following is a 444-amino-acid chain: S-locus-specific glycoprotein BS29-1 (444 aa).

The signal sequence occupies residues Met1–Ser28. The 129-residue stretch at Thr31 to Trp159 folds into the Bulb-type lectin domain. N-linked (GlcNAc...) asparagine glycans are attached at residues Asn43, Asn125, Asn180, Asn243, and Asn396. The PAN domain maps to Cys356–Ala437. 2 disulfide bridges follow: Cys387-Cys412 and Cys395-Cys397.

Stigma.

Involved in sporophytic self-incompatibility system (the inability of flowering plants to achieve self-fertilization). The polypeptide is S-locus-specific glycoprotein BS29-1 (SLSG) (Brassica oleracea var. alboglabra (Chinese kale)).